The following is a 180-amino-acid chain: ATP synthase subunit delta (180 aa).

Belongs to the ATPase delta chain family. F-type ATPases have 2 components, F(1) - the catalytic core - and F(0) - the membrane proton channel. F(1) has five subunits: alpha(3), beta(3), gamma(1), delta(1), epsilon(1). F(0) has three main subunits: a(1), b(2) and c(10-14). The alpha and beta chains form an alternating ring which encloses part of the gamma chain. F(1) is attached to F(0) by a central stalk formed by the gamma and epsilon chains, while a peripheral stalk is formed by the delta and b chains.

Its subcellular location is the cell inner membrane. In terms of biological role, f(1)F(0) ATP synthase produces ATP from ADP in the presence of a proton or sodium gradient. F-type ATPases consist of two structural domains, F(1) containing the extramembraneous catalytic core and F(0) containing the membrane proton channel, linked together by a central stalk and a peripheral stalk. During catalysis, ATP synthesis in the catalytic domain of F(1) is coupled via a rotary mechanism of the central stalk subunits to proton translocation. Its function is as follows. This protein is part of the stalk that links CF(0) to CF(1). It either transmits conformational changes from CF(0) to CF(1) or is implicated in proton conduction. The polypeptide is ATP synthase subunit delta (Legionella pneumophila subsp. pneumophila (strain Philadelphia 1 / ATCC 33152 / DSM 7513)).